Here is a 64-residue protein sequence, read N- to C-terminus: DNA gyrase inhibitor YacG (64 aa).

Cys9, Cys12, Cys28, and Cys32 together coordinate Zn(2+). The interval 45 to 64 (KRIPSAGDLSDSDDWSEQQP) is disordered. A compositionally biased stretch (acidic residues) spans 54–64 (SDSDDWSEQQP).

This sequence belongs to the DNA gyrase inhibitor YacG family. As to quaternary structure, interacts with GyrB. It depends on Zn(2+) as a cofactor.

Inhibits all the catalytic activities of DNA gyrase by preventing its interaction with DNA. Acts by binding directly to the C-terminal domain of GyrB, which probably disrupts DNA binding by the gyrase. This chain is DNA gyrase inhibitor YacG, found in Klebsiella pneumoniae (strain 342).